A 410-amino-acid chain; its full sequence is Regulator of microtubule dynamics protein 2 (410 aa).

A helical membrane pass occupies residues 10-27; sequence ILGIVVGTAGISLLLLWY. Residues 71-109 are a coiled coil; sequence RQLQILEKLNELLTHMEELKEEIRVLKEAIPKLEEYIQG. Ser121 is modified (phosphoserine). The span at 122 to 131 shows a compositional bias: basic residues; that stretch reads PQHRARKRRL. The tract at residues 122–153 is disordered; it reads PQHRARKRRLATVQSSATSNSSEEAESEGGYV. Thr139 carries the phosphothreonine modification. At Tyr152 the chain carries Phosphotyrosine. A phosphothreonine mark is found at Thr154 and Thr157.

Belongs to the RMDN family. Interacts with microtubules.

Its subcellular location is the membrane. It is found in the cytoplasm. The protein resides in the cytoskeleton. The protein localises to the spindle. It localises to the spindle pole. The chain is Regulator of microtubule dynamics protein 2 (RMDN2) from Bos taurus (Bovine).